The primary structure comprises 231 residues: Succinate dehydrogenase subunit 5, mitochondrial (231 aa).

A mitochondrion-targeting transit peptide spans 1–63; the sequence is MAAALRSSCA…AFSWNLRRLF (63 aa).

As to quaternary structure, component of complex II composed of eight subunits in plants: four classical SDH subunits SDH1, SDH2, SDH3 and SDH4 (a flavoprotein (FP), an iron-sulfur protein (IP), and a cytochrome b composed of a large and a small subunit.), as well as four subunits unknown in mitochondria from bacteria and heterotrophic eukaryotes.

It localises to the mitochondrion inner membrane. The protein operates within carbohydrate metabolism; tricarboxylic acid cycle. The protein is Succinate dehydrogenase subunit 5, mitochondrial of Oryza sativa subsp. japonica (Rice).